We begin with the raw amino-acid sequence, 391 residues long: Elongation factor Tu 2 (391 aa).

The 192-residue stretch at 10-201 (KPHVNIGTIG…EVDRYIPTPE (192 aa)) folds into the tr-type G domain. Positions 19 to 26 (GHVDHGKT) are G1. GTP is bound at residue 19-26 (GHVDHGKT). A Mg(2+)-binding site is contributed by threonine 26. The interval 55-59 (GITIS) is G2. Residues 76 to 79 (DCPG) are G3. Residues 76–80 (DCPGH) and 131–134 (NKVD) each bind GTP. The interval 131–134 (NKVD) is G4. The tract at residues 169-171 (SAL) is G5.

It belongs to the TRAFAC class translation factor GTPase superfamily. Classic translation factor GTPase family. EF-Tu/EF-1A subfamily. In terms of assembly, monomer.

The protein resides in the cytoplasm. The catalysed reaction is GTP + H2O = GDP + phosphate + H(+). In terms of biological role, GTP hydrolase that promotes the GTP-dependent binding of aminoacyl-tRNA to the A-site of ribosomes during protein biosynthesis. The sequence is that of Elongation factor Tu 2 from Bartonella bacilliformis (strain ATCC 35685 / KC583 / Herrer 020/F12,63).